The primary structure comprises 481 residues: Sphingosine kinase 2 (481 aa).

The 143-residue stretch at 111–253 (GRPKRLLVFV…VDVATIAQGN (143 aa)) folds into the DAGKc domain. ATP is bound by residues 121-123 (NPF) and Thr153. 178-181 (SGDG) contacts substrate. Asp180 serves as the catalytic Proton donor/acceptor. ATP contacts are provided by residues Glu185 and 210-212 (GTG). Substrate is bound at residue Asp271. Residues Arg278, Arg284, and 441 to 443 (DGE) each bind ATP.

It depends on Mg(2+) as a cofactor. In terms of tissue distribution, highly expressed in flowers and siliques and at lower levels in roots, leaves and stems.

The protein localises to the vacuole membrane. The enzyme catalyses a sphingoid base + ATP = a sphingoid 1-phosphate + ADP + H(+). With respect to regulation, activated by phosphatidic acid (PA). Binding with PA stimulates the activity by promoting the binding of substrate to the catalytic site. Functionally, involved in the production of sphingolipid metabolites. Phosphorylates sphingosine and various l sphingoid long-chain base (LCB) products, such as phytosphingosine (PHS, 4-hydroxysphinganine), 4-hydroxy-8-sphingenine, 4,8-sphingadienine and D-erythro-dihydrosphingosine, but has a very few activity toward D,L-threo- dihydrosphingosine. Is required for abscisic acid (ABA) signaling that mediates stomatal closure, inhibition of seed germination and root elongation. May function upstream of PLDALPHA1 and phosphatidic acid (PA) in an amplification response to ABA that mediates stomatal closure. The polypeptide is Sphingosine kinase 2 (SPHK2) (Arabidopsis thaliana (Mouse-ear cress)).